The chain runs to 602 residues: Pyranose dehydrogenase 1 (602 aa).

An N-terminal signal peptide occupies residues 1-25; that stretch reads MLPRVTKLNSRLLSLALLGIQIARG. An N-linked (GlcNAc...) asparagine glycan is attached at Asn100. Residue His128 is modified to Tele-8alpha-FAD histidine. Residues Asn200, Asn277, and Asn344 are each glycosylated (N-linked (GlcNAc...) asparagine). Catalysis depends on His537, which acts as the Proton acceptor. The active site involves His581.

This sequence belongs to the GMC oxidoreductase family. As to quaternary structure, monomer. Requires FAD as cofactor. In terms of processing, N-glycosylated.

The protein localises to the secreted. The catalysed reaction is pyranose + acceptor = pyranos-2-ulose + reduced acceptor.. It catalyses the reaction pyranose + acceptor = pyranos-3-ulose + reduced acceptor.. The enzyme catalyses pyranose + acceptor = pyranos-2,3-diulose + reduced acceptor.. It carries out the reaction a pyranoside + acceptor = a pyranosid-3-ulose + reduced acceptor.. The catalysed reaction is a pyranoside + acceptor = a pyranosid-3,4-diulose + reduced acceptor.. Its function is as follows. Catalyzes the single-oxidation or sequential double oxidation reaction of carbohydrates primarily at carbon-2 and/or carbon-3 with the concomitant reduction of the flavin. The enzyme exhibits a broad sugar substrate specificity, oxidizing different aldopyranoses to the corresponding C-1, C-2, C-3 or C-1,2, C-2,3 and C-3,4 (di)dehydro sugars with substrate-specific regioselectivity. Accepts only a narrow range of electron acceptors such as substituted benzoquinones and complexed metal ions and reacts extremely slowly with O(2) as acceptor. May play a role in the natural recycling of plant matter by oxidizing all major monosaccharides in lignocellulose and by reducing quinone compounds or reactive radical species generated during lignin depolymerization. The protein is Pyranose dehydrogenase 1 of Leucoagaricus meleagris (Western flat-topped agaric).